The primary structure comprises 340 residues: Thermopsin (340 aa).

The first 28 residues, 1 to 28 (MNFKSICLIILLSALIIPYIPQNIYFFP), serve as a signal peptide directing secretion. A propeptide spanning residues 29–41 (HRNTTGATISSGL) is cleaved from the precursor. N-linked (GlcNAc...) asparagine glycosylation is found at asparagine 31, asparagine 65, asparagine 85, asparagine 117, asparagine 148, asparagine 197, asparagine 277, asparagine 287, asparagine 327, and asparagine 334.

Belongs to the peptidase A5 family.

The protein resides in the secreted. It carries out the reaction Specificity similar to pepsin A, prefers bulky hydrophobic side-chains on either side of the scissible bond.. May represent a new class of acid proteases. It digests proteins and peptides in acidic solution. The polypeptide is Thermopsin (thpS) (Sulfolobus acidocaldarius (strain ATCC 33909 / DSM 639 / JCM 8929 / NBRC 15157 / NCIMB 11770)).